We begin with the raw amino-acid sequence, 343 residues long: Mitochondrial distribution and morphology protein 34 (343 aa).

Residues 1–196 (MSFVFPSWST…LPGIIHRLSQ (196 aa)) enclose the SMP-LTD domain. Disordered regions lie at residues 227-255 (EVEEEENEENHGTSPGNEESFPPRHIGPG) and 300-325 (GAGTGSSGRASLASSSVGEGDIKAKR). The span at 306-317 (SGRASLASSSVG) shows a compositional bias: low complexity.

Belongs to the MDM34 family. Component of the ER-mitochondria encounter structure (ERMES) or MDM complex, composed of MMM1, MDM10, MDM12 and MDM34.

It localises to the mitochondrion outer membrane. In terms of biological role, component of the ERMES/MDM complex, which serves as a molecular tether to connect the endoplasmic reticulum (ER) and mitochondria. Components of this complex are involved in the control of mitochondrial shape and protein biogenesis, and function in nonvesicular lipid trafficking between the ER and mitochondria. MDM34 is required for the interaction of the ER-resident membrane protein MMM1 and the outer mitochondrial membrane-resident beta-barrel protein MDM10. This is Mitochondrial distribution and morphology protein 34 from Cryptococcus neoformans var. neoformans serotype D (strain B-3501A) (Filobasidiella neoformans).